A 67-amino-acid polypeptide reads, in one-letter code: Beta-defensin 9 (67 aa).

Positions M1–S24 are cleaved as a signal peptide. Intrachain disulfides connect C34–C62, C41–C55, and C45–C63.

It belongs to the beta-defensin family. Weakly expressed in adult and neonatal brain.

It localises to the secreted. Its function is as follows. Has antibacterial activity. This chain is Beta-defensin 9 (Defb9), found in Mus musculus (Mouse).